A 189-amino-acid chain; its full sequence is Cell division protein SepF (189 aa).

Disordered stretches follow at residues M1–G75 and S155–P174.

It belongs to the SepF family. Homodimer. Interacts with FtsZ.

The protein resides in the cytoplasm. Its function is as follows. Cell division protein that is part of the divisome complex and is recruited early to the Z-ring. Probably stimulates Z-ring formation, perhaps through the cross-linking of FtsZ protofilaments. Its function overlaps with FtsA. The sequence is that of Cell division protein SepF from Synechococcus sp. (strain JA-3-3Ab) (Cyanobacteria bacterium Yellowstone A-Prime).